We begin with the raw amino-acid sequence, 304 residues long: Protoheme IX farnesyltransferase (304 aa).

9 consecutive transmembrane segments (helical) span residues 31–51, 58–78, 99–119, 126–146, 154–174, 180–200, 222–242, 243–263, and 284–304; these read VNTL…PDGL, VAAT…NCLI, LAPA…LTVL, LTMW…TVLL, IVIG…AVTG, ALLL…ALAL, FTRL…LLPF, ATRM…IGFL, and FSIL…YLPL.

The protein belongs to the UbiA prenyltransferase family. Protoheme IX farnesyltransferase subfamily.

It is found in the cell inner membrane. The enzyme catalyses heme b + (2E,6E)-farnesyl diphosphate + H2O = Fe(II)-heme o + diphosphate. It participates in porphyrin-containing compound metabolism; heme O biosynthesis; heme O from protoheme: step 1/1. In terms of biological role, converts heme B (protoheme IX) to heme O by substitution of the vinyl group on carbon 2 of heme B porphyrin ring with a hydroxyethyl farnesyl side group. The chain is Protoheme IX farnesyltransferase from Aromatoleum aromaticum (strain DSM 19018 / LMG 30748 / EbN1) (Azoarcus sp. (strain EbN1)).